The chain runs to 1937 residues: Myosin-8 (1937 aa).

A Myosin N-terminal SH3-like domain is found at 35-84 (DAKTSVFVAEPKESYVKSTIQSKEGGKVTVKTEGGATLTVREDQVFPMNP). A phosphothreonine mark is found at Thr-66 and Thr-71. In terms of domain architecture, Myosin motor spans 88–781 (DKIEDMAMMT…LLGLLEEMRD (694 aa)). Residue Lys-132 is modified to N6,N6,N6-trimethyllysine. 181–188 (GESGAGKT) is an ATP binding site. Phosphotyrosine is present on Tyr-389. At Ser-392 the chain carries Phosphoserine. Thr-419 is modified (phosphothreonine). Residue Tyr-424 is modified to Phosphotyrosine. The residue at position 625 (Ser-625) is a Phosphoserine. Residues 658–680 (LNKLMTNLRSTHPHFVRCIIPNE) form an actin-binding region. Residue His-756 is modified to Pros-methylhistidine. The tract at residues 760 to 774 (KFGHTKVFFKAGLLG) is actin-binding. One can recognise an IQ domain in the interval 781–813 (DEKLAQIITRTQAVCRGFLMRVEYQKMLQRREA). A coiled-coil region spans residues 842 to 1937 (LLKSAETEKE…REVHTKISAE (1096 aa)). Phosphoserine is present on residues Ser-1091 and Ser-1095. The disordered stretch occupies residues 1126-1146 (EAERASRAKAEKQRSDLSREL). Residues 1127–1146 (AERASRAKAEKQRSDLSREL) are compositionally biased toward basic and acidic residues. Ser-1161, Ser-1236, Ser-1242, and Ser-1260 each carry phosphoserine. Residues Thr-1264 and Thr-1285 each carry the phosphothreonine modification. A phosphoserine mark is found at Ser-1291, Ser-1302, and Ser-1305. Tyr-1463 bears the Phosphotyrosine mark. Thr-1466 carries the phosphothreonine modification. Position 1473 is a phosphoserine (Ser-1473). Tyr-1491 carries the phosphotyrosine modification. Ser-1494 is modified (phosphoserine). Thr-1500 is subject to Phosphothreonine. Ser-1513 carries the phosphoserine modification. Thr-1516 is subject to Phosphothreonine. Ser-1553, Ser-1573, Ser-1602, Ser-1713, and Ser-1725 each carry phosphoserine. Thr-1729 carries the post-translational modification Phosphothreonine. Ser-1738 bears the Phosphoserine mark.

The protein belongs to the TRAFAC class myosin-kinesin ATPase superfamily. Myosin family. Muscle myosin is a hexameric protein that consists of 2 heavy chain subunits (MHC), 2 alkali light chain subunits (MLC) and 2 regulatory light chain subunits (MLC-2).

The protein localises to the cytoplasm. Its subcellular location is the myofibril. Its function is as follows. Muscle contraction. This Homo sapiens (Human) protein is Myosin-8 (MYH8).